A 520-amino-acid polypeptide reads, in one-letter code: Cryptochrome DASH (520 aa).

Positions 5 to 141 (RTVICLLRND…RVQTFWGSTL (137 aa)) constitute a Photolyase/cryptochrome alpha/beta domain. The segment at 479 to 504 (SRHVNNKSSGPSSSKGRKGSSYTARQ) is disordered.

This sequence belongs to the DNA photolyase class-1 family. FAD is required as a cofactor. (6R)-5,10-methylene-5,6,7,8-tetrahydrofolate serves as cofactor.

In terms of biological role, may have a photoreceptor function. Has weak cyclobutyl pyrimidine photolyase activity when expressed in E.coli and when tested in vitro. In Danio rerio (Zebrafish), this protein is Cryptochrome DASH (cry-dash).